Here is an 84-residue protein sequence, read N- to C-terminus: Small ribosomal subunit protein bS18 (84 aa).

This sequence belongs to the bacterial ribosomal protein bS18 family. In terms of assembly, part of the 30S ribosomal subunit. Forms a tight heterodimer with protein bS6.

Binds as a heterodimer with protein bS6 to the central domain of the 16S rRNA, where it helps stabilize the platform of the 30S subunit. This chain is Small ribosomal subunit protein bS18, found in Dictyoglomus turgidum (strain DSM 6724 / Z-1310).